A 45-amino-acid polypeptide reads, in one-letter code: Large ribosomal subunit protein bL34 (45 aa).

Residues 1–45 form a disordered region; the sequence is MTKRTLGGTVRKQKRTSGFRARMRSHTGQNVIRARRKKGRHRLTV. Composition is skewed to basic residues over residues 11-25 and 33-45; these read RKQK…RMRS and RARR…RLTV.

This sequence belongs to the bacterial ribosomal protein bL34 family.

This Picosynechococcus sp. (strain ATCC 27264 / PCC 7002 / PR-6) (Agmenellum quadruplicatum) protein is Large ribosomal subunit protein bL34.